The primary structure comprises 114 residues: Putative antiporter subunit mnhC2 (114 aa).

Helical transmembrane passes span 3-23 (LILL…ILSI), 28-48 (IVIG…SMGT), and 72-92 (AIVL…LVLV).

Belongs to the CPA3 antiporters (TC 2.A.63) subunit C family. In terms of assembly, may form a heterooligomeric complex that consists of seven subunits: mnhA2, mnhB2, mnhC2, mnhD2, mnhE2, mnhF2 and mnhG2.

Its subcellular location is the cell membrane. The polypeptide is Putative antiporter subunit mnhC2 (mnhC2) (Staphylococcus aureus (strain Mu3 / ATCC 700698)).